The chain runs to 122 residues: MAVDGQSNKRRKAERRGHAAEYWAALYLLLKGYRILAIRYRTRLGEIDLIARKKDLIAIIEVKARASGGSAVDAVGFHSQQRIRAAADLWLSRRRDAGRFSLRFDIVAVLPRRLPQHFIDAF.

The protein belongs to the UPF0102 family.

This is UPF0102 protein Atu0303 from Agrobacterium fabrum (strain C58 / ATCC 33970) (Agrobacterium tumefaciens (strain C58)).